The sequence spans 227 residues: Germin-like protein 3-5 (227 aa).

The first 29 residues, 1–29 (MEYGFKAAGLVFVVLLLQQAPVLIRATDA), serve as a signal peptide directing secretion. Cys36 and Cys51 are disulfide-bonded. Residues 65-217 (SKIATGGDVN…ALRVDAGVVE (153 aa)) form the Cupin type-1 domain. N-linked (GlcNAc...) asparagine glycosylation is found at Asn78 and Asn81. 4 residues coordinate Mn(2+): His114, His116, Glu121, and His163.

It belongs to the germin family. In terms of assembly, oligomer (believed to be a pentamer but probably hexamer).

The protein resides in the secreted. Its subcellular location is the extracellular space. It is found in the apoplast. In terms of biological role, may play a role in plant defense. Probably has no oxalate oxidase activity even if the active site is conserved. This is Germin-like protein 3-5 from Oryza sativa subsp. japonica (Rice).